The chain runs to 500 residues: Glutamate decarboxylase (500 aa).

Residue Lys277 is modified to N6-(pyridoxal phosphate)lysine. Residues 469–500 form a calmodulin-binding region; that stretch reads VHKKTDSEVQLEMITAWKKFVEEKKKKTNRVC.

This sequence belongs to the group II decarboxylase family. As to quaternary structure, homodimer. Pyridoxal 5'-phosphate is required as a cofactor.

The enzyme catalyses L-glutamate + H(+) = 4-aminobutanoate + CO2. Its function is as follows. Catalyzes the production of GABA. The calmodulin-binding is calcium-dependent and it is proposed that this may, directly or indirectly, form a calcium regulated control of GABA biosynthesis. The polypeptide is Glutamate decarboxylase (GAD) (Petunia hybrida (Petunia)).